The sequence spans 239 residues: Large ribosomal subunit protein uL1 (239 aa).

This sequence belongs to the universal ribosomal protein uL1 family. As to quaternary structure, part of the 50S ribosomal subunit.

Functionally, binds directly to 23S rRNA. The L1 stalk is quite mobile in the ribosome, and is involved in E site tRNA release. In terms of biological role, protein L1 is also a translational repressor protein, it controls the translation of the L11 operon by binding to its mRNA. The sequence is that of Large ribosomal subunit protein uL1 from Mycolicibacterium gilvum (strain PYR-GCK) (Mycobacterium gilvum (strain PYR-GCK)).